A 633-amino-acid polypeptide reads, in one-letter code: Peptidoglycan D,D-transpeptidase MrdA (633 aa).

A helical transmembrane segment spans residues 22–42 (LVAFLGILLLTGVLIANLYNL). S330 functions as the Acyl-ester intermediate in the catalytic mechanism.

This sequence belongs to the transpeptidase family. MrdA subfamily.

The protein resides in the cell inner membrane. It carries out the reaction Preferential cleavage: (Ac)2-L-Lys-D-Ala-|-D-Ala. Also transpeptidation of peptidyl-alanyl moieties that are N-acyl substituents of D-alanine.. It functions in the pathway cell wall biogenesis; peptidoglycan biosynthesis. Catalyzes cross-linking of the peptidoglycan cell wall. This chain is Peptidoglycan D,D-transpeptidase MrdA, found in Escherichia coli O157:H7.